The chain runs to 161 residues: Putative ecotin-like protein (161 aa).

The first 24 residues, 1–24 (MSLRPIETAIASLTMLMLQGCAHA), serve as a signal peptide directing secretion.

The protein belongs to the protease inhibitor I11 (ecotin) family.

The chain is Putative ecotin-like protein from Methylobacillus flagellatus (strain ATCC 51484 / DSM 6875 / VKM B-1610 / KT).